A 210-amino-acid polypeptide reads, in one-letter code: LexA repressor (210 aa).

Positions 31–51 form a DNA-binding region, H-T-H motif; sequence RVEISKELGFRSPNAAEEHLK. Residues Ser126 and Lys163 each act as for autocatalytic cleavage activity in the active site.

This sequence belongs to the peptidase S24 family. Homodimer.

The enzyme catalyses Hydrolysis of Ala-|-Gly bond in repressor LexA.. Functionally, represses a number of genes involved in the response to DNA damage (SOS response), including recA and lexA. In the presence of single-stranded DNA, RecA interacts with LexA causing an autocatalytic cleavage which disrupts the DNA-binding part of LexA, leading to derepression of the SOS regulon and eventually DNA repair. The protein is LexA repressor of Histophilus somni (strain 129Pt) (Haemophilus somnus).